We begin with the raw amino-acid sequence, 311 residues long: Very-long-chain 3-oxoacyl-CoA reductase-B (311 aa).

A helical transmembrane segment spans residues 8–28 (LFWVGAVTVLWLSVSSLWSLI). Residue 48–77 (GKWAVVTGATDGIGKAYAEELARRGFAIVL) participates in NADP(+) binding. The helical transmembrane segment at 125 to 145 (IGVLVNNVGVSYSYPEFFLNI) threads the bilayer. S187 is a substrate binding site. Residue Y200 is the Proton acceptor of the active site. Residues 269–289 (GYLPHAIMGWVTASLLPAKLL) traverse the membrane as a helical segment.

The protein belongs to the short-chain dehydrogenases/reductases (SDR) family. 17-beta-HSD 3 subfamily.

Its subcellular location is the endoplasmic reticulum membrane. The enzyme catalyses a very-long-chain (3R)-3-hydroxyacyl-CoA + NADP(+) = a very-long-chain 3-oxoacyl-CoA + NADPH + H(+). It catalyses the reaction 17beta-estradiol + NAD(+) = estrone + NADH + H(+). It carries out the reaction 17beta-estradiol + NADP(+) = estrone + NADPH + H(+). It participates in lipid metabolism; fatty acid biosynthesis. Its pathway is steroid biosynthesis; estrogen biosynthesis. Its function is as follows. Catalyzes the second of the four reactions of the long-chain fatty acids elongation cycle. This endoplasmic reticulum-bound enzymatic process, allows the addition of two carbons to the chain of long- and very long-chain fatty acids/VLCFAs per cycle. This enzyme has a 3-ketoacyl-CoA reductase activity, reducing 3-ketoacyl-CoA to 3-hydroxyacyl-CoA, within each cycle of fatty acid elongation. Thereby, it may participate in the production of VLCFAs of different chain lengths that are involved in multiple biological processes as precursors of membrane lipids and lipid mediators. May also catalyze the transformation of estrone (E1) into estradiol (E2) and play a role in estrogen formation. The polypeptide is Very-long-chain 3-oxoacyl-CoA reductase-B (hsd17b12b) (Danio rerio (Zebrafish)).